Consider the following 265-residue polypeptide: Serine protease ami (265 aa).

An N-terminal signal peptide occupies residues 1–21; that stretch reads MNVSWALLAVVLVLTVATYEC. N-linked (GlcNAc...) asparagine glycosylation occurs at N2. A propeptide spans 22 to 26 (activation peptide); it reads RPRGR. Residues 27–254 form the Peptidase S1 domain; it reads ILGGQDSKAE…YKSWIMESMY (228 aa). An intrachain disulfide couples C52 to C68. H67 (charge relay system) is an active-site residue. 3 N-linked (GlcNAc...) asparagine glycosylation sites follow: N71, N74, and N108. D115 (charge relay system) is an active-site residue. 3 disulfides stabilise this stretch: C149-C215, C180-C196, and C205-C230. Residue S209 is the Charge relay system of the active site. N255 carries an N-linked (GlcNAc...) asparagine glycan.

This sequence belongs to the peptidase S1 family.

Its subcellular location is the secreted. Its function is as follows. Probable serine protease. The polypeptide is Serine protease ami (Xenopus tropicalis (Western clawed frog)).